The primary structure comprises 224 residues: 7-cyano-7-deazaguanine synthase (224 aa).

12–22 serves as a coordination point for ATP; that stretch reads LSGGLDSSTVT. The Zn(2+) site is built by Cys-193, Cys-201, Cys-204, and Cys-207.

This sequence belongs to the QueC family. The cofactor is Zn(2+).

It carries out the reaction 7-carboxy-7-deazaguanine + NH4(+) + ATP = 7-cyano-7-deazaguanine + ADP + phosphate + H2O + H(+). It functions in the pathway purine metabolism; 7-cyano-7-deazaguanine biosynthesis. Functionally, catalyzes the ATP-dependent conversion of 7-carboxy-7-deazaguanine (CDG) to 7-cyano-7-deazaguanine (preQ(0)). This is 7-cyano-7-deazaguanine synthase from Prochlorococcus marinus subsp. pastoris (strain CCMP1986 / NIES-2087 / MED4).